Reading from the N-terminus, the 490-residue chain is Fumitremorgin C monooxygenase (490 aa).

Residues 12-32 traverse the membrane as a helical segment; sequence LGVVGASLIVILGIILLFPLG. C442 is a heme binding site.

The protein belongs to the cytochrome P450 family. It depends on heme as a cofactor.

Its subcellular location is the membrane. It catalyses the reaction fumitremorgin C + 2 reduced [NADPH--hemoprotein reductase] + 2 O2 = 12alpha,13alpha-dihydroxyfumitremorgin C + 2 oxidized [NADPH--hemoprotein reductase] + 2 H2O + 2 H(+). The protein operates within mycotoxin biosynthesis. Its function is as follows. Cytochrome P450 monooxygenase; part of the gene cluster that mediates the biosynthesis of fumitremorgins, indole alkaloids that carry not only intriguing chemical structures, but also interesting biological and pharmacological activities. The biosynthesis of fumitremorgin-type alkaloids begins by condensation of the two amino acids L-tryptophan and L-proline to brevianamide F, catalyzed by the non-ribosomal peptide synthetase ftmA. Brevianamide F is then prenylated by the prenyltransferase ftmPT1/ftmB in the presence of dimethylallyl diphosphate, resulting in the formation of tryprostatin B. The three cytochrome P450 monooxygenases, ftmP450-1/ftmC, ftmP450-2/ftmE and ftmP450-3/FtmG, are responsible for the conversion of tryprostatin B to 6-hydroxytryprostatin B, tryprostatin A to fumitremorgin C and fumitremorgin C to 12,13-dihydroxyfumitremorgin C, respectively. The putative methyltransferase ftmMT/ftmD is expected for the conversion of 6-hydroxytryprostatin B to tryprostatin A. FtmPT2/FtmH catalyzes the prenylation of 12,13-dihydroxyfumitre-morgin C in the presence of dimethylallyl diphosphate, resulting in the formation of fumitremorgin B. Fumitremorgin B is further converted to verruculogen by ftmOx1/ftmF via the insertion of an endoperoxide bond between the two prenyl moieties. In some fungal species, verruculogen is further converted to fumitremorgin A, but the enzymes involved in this step have not been identified yet. This chain is Fumitremorgin C monooxygenase, found in Aspergillus fumigatus (strain ATCC MYA-4609 / CBS 101355 / FGSC A1100 / Af293) (Neosartorya fumigata).